A 291-amino-acid chain; its full sequence is Undecaprenyl-diphosphatase (291 aa).

8 helical membrane-spanning segments follow: residues 1 to 21, 48 to 68, 100 to 120, 124 to 144, 160 to 180, 201 to 221, 230 to 250, and 270 to 290; these read MIIIEFIKGLILGIVEGLTEF, SAFTFKVVIQLGSVFAAAWVF, LHVLVGMIPAGILGVLFDDFI, LFSVPTVMIGLFLGAIYMIIA, INYVQAFVIGISQAVAMWPGF, SDFTFIMAVPIMLAASALSLV, AHIPFYLIGFLAAFIVGLIAI, and IVLVIIIAILYFGFGIGQGIS.

This sequence belongs to the UppP family.

The protein localises to the cell membrane. It catalyses the reaction di-trans,octa-cis-undecaprenyl diphosphate + H2O = di-trans,octa-cis-undecaprenyl phosphate + phosphate + H(+). Functionally, catalyzes the dephosphorylation of undecaprenyl diphosphate (UPP). Confers resistance to bacitracin. The protein is Undecaprenyl-diphosphatase of Staphylococcus haemolyticus (strain JCSC1435).